A 388-amino-acid chain; its full sequence is Probable proton-coupled zinc antiporter SLC30A3 (388 aa).

A disordered region spans residues 1–41 (MEPSLATGGSETTRLVSARDRSSAGGGLRLKSLFTEPSEPL). The Cytoplasmic portion of the chain corresponds to 1–75 (MEPSLATGGS…SPERVQARRQ (75 aa)). Residues S63 and S66 each carry the phosphoserine modification. The helical transmembrane segment at 76–96 (LYAACAVCFIFMAGEVVGGYL) threads the bilayer. Topologically, residues 97-105 (AHSLAIMTD) are lumenal. The helical transmembrane segment at 106 to 126 (AAHLLADIGSMLASLFSLWLS) threads the bilayer. Positions 108 and 112 each coordinate Zn(2+). The Cytoplasmic portion of the chain corresponds to 127 to 145 (TRPATRTMTFGWHRSETLG). The helical transmembrane segment at 146 to 166 (ALASVVSLWIVTGILLYLAFL) threads the bilayer. Topologically, residues 167–177 (RLLHSDYHIEA) are lumenal. Residues 178–198 (GAMLLTASIAVCANLLMAFVL) traverse the membrane as a helical segment. At 199–235 (HQTGAPHSHGSTGAEYAPLEEGHGYPMSLGNTSVRAA) the chain is on the cytoplasmic side. A helical transmembrane segment spans residues 236–256 (FVHVLGDLLQSFGVLAASILI). Zn(2+)-binding residues include H238 and D242. At 257–263 (YFKPQYK) the chain is on the lumenal side. Residues 264-284 (VADPISTFLFSICALGSTAPT) traverse the membrane as a helical segment. Residues 285–388 (LRDVLLVLME…CLRCQEPSQA (104 aa)) lie on the Cytoplasmic side of the membrane.

It belongs to the cation diffusion facilitator (CDF) transporter (TC 2.A.4) family. SLC30A subfamily. In terms of assembly, homodimer. Homodimerization is negligible compared to the human protein. It could explain the lower efficiency of zinc transport. Interacts with TMEM163. In terms of tissue distribution, expression is restricted to brain (at protein level). In the brain, most abundant in hippocampus and cerebral cortex. The mRNA is also detected in testis, expression being restricted to germ cells and highest in pachytene spermatocytes and round spermatids.

The protein resides in the cytoplasmic vesicle. Its subcellular location is the secretory vesicle. The protein localises to the synaptic vesicle membrane. It is found in the synapse. It localises to the synaptosome. The protein resides in the late endosome membrane. Its subcellular location is the lysosome membrane. It catalyses the reaction Zn(2+)(in) + 2 H(+)(out) = Zn(2+)(out) + 2 H(+)(in). Its function is as follows. Probable proton-coupled zinc ion antiporter mediating the import of zinc from cytoplasm into synaptic vesicles and participating to cellular zinc ion homeostasis in the brain. This chain is Probable proton-coupled zinc antiporter SLC30A3, found in Mus musculus (Mouse).